A 365-amino-acid polypeptide reads, in one-letter code: Mitogen-activated protein kinase HOG1A (365 aa).

One can recognise a Protein kinase domain in the interval 24 to 303; it reads YTDLQPVGMG…AADALAHPYL (280 aa). Residues 30 to 38 and Lys53 contribute to the ATP site; that span reads VGMGAFGLL. The active-site Proton acceptor is Asp145. Position 175 is a phosphothreonine (Thr175). The TXY motif lies at 175–177; it reads TGY. The residue at position 177 (Tyr177) is a Phosphotyrosine.

This sequence belongs to the protein kinase superfamily. Ser/Thr protein kinase family. MAP kinase subfamily. HOG1 sub-subfamily. Requires Mg(2+) as cofactor. Phosphorylated. Dually phosphorylated on Thr-175 and Tyr-177, which activates the enzyme. Rapidly dephosphorylated upon either hypo- or hyperosmotic shock.

It is found in the cytoplasm. Its subcellular location is the nucleus. The enzyme catalyses L-seryl-[protein] + ATP = O-phospho-L-seryl-[protein] + ADP + H(+). The catalysed reaction is L-threonyl-[protein] + ATP = O-phospho-L-threonyl-[protein] + ADP + H(+). With respect to regulation, activated by tyrosine and threonine phosphorylation. Proline-directed serine/threonine-protein kinase involved in a signal transduction pathway that is activated by changes in the osmolarity of the extracellular environment. Controls osmotic regulation of transcription of target genes. The polypeptide is Mitogen-activated protein kinase HOG1A (HOG1A) (Wallemia ichthyophaga (strain EXF-994 / CBS 113033)).